The sequence spans 236 residues: Protein-L-isoaspartate O-methyltransferase 1 (236 aa).

S85 is an active-site residue.

This sequence belongs to the methyltransferase superfamily. L-isoaspartyl/D-aspartyl protein methyltransferase family.

It is found in the cytoplasm. It carries out the reaction [protein]-L-isoaspartate + S-adenosyl-L-methionine = [protein]-L-isoaspartate alpha-methyl ester + S-adenosyl-L-homocysteine. Catalyzes the methyl esterification of L-isoaspartyl residues in peptides and proteins that result from spontaneous decomposition of normal L-aspartyl and L-asparaginyl residues. It plays a role in the repair and/or degradation of damaged proteins. The protein is Protein-L-isoaspartate O-methyltransferase 1 of Polaromonas sp. (strain JS666 / ATCC BAA-500).